The primary structure comprises 377 residues: Sodium-dependent organic anion transporter (377 aa).

The Extracellular segment spans residues 1 to 29; sequence MRANCSSSSACPANSSEEELPVGLEVHGN. A glycan (N-linked (GlcNAc...) asparagine) is linked at asparagine 4. Residues 30–50 form a helical membrane-spanning segment; it reads LELVFTVVSTVMMGLLMFSLG. Residues 51–67 are Cytoplasmic-facing; the sequence is CSVEIRKLWSHIRRPWG. The helical transmembrane segment at 68 to 88 threads the bilayer; that stretch reads IAVGLLCQFGLMPFTAYLLAI. Over 89–97 the chain is Extracellular; that stretch reads SFSLKPVQA. A helical transmembrane segment spans residues 98-118; the sequence is IAVLIMGCCPGGTISNIFTFW. The Cytoplasmic segment spans residues 119–133; the sequence is VDGDMDLSISMTTCS. The chain crosses the membrane as a helical span at residues 134-154; sequence TVAALGMMPLCIYLYTWSWSL. The Extracellular portion of the chain corresponds to 155 to 159; the sequence is QQNLT. N-linked (GlcNAc...) asparagine glycosylation is present at asparagine 157. Residues 160–180 form a helical membrane-spanning segment; that stretch reads IPYQNIGITLVCLTIPVAFGV. Topologically, residues 181–195 are cytoplasmic; it reads YVNYRWPKQSKIILK. The chain crosses the membrane as a helical span at residues 196 to 216; it reads IGAVVGGVLLLVVAVAGVVLA. Topologically, residues 217 to 226 are extracellular; it reads KGSWNSDITL. A helical transmembrane segment spans residues 227 to 247; the sequence is LTISFIFPLIGHVTGFLLALF. At 248 to 266 the chain is on the cytoplasmic side; it reads THQSWQRCRTISLETGAQN. The chain crosses the membrane as a helical span at residues 267–285; the sequence is IQMCITMLQLSFTAEHLVQ. At 286–290 the chain is on the extracellular side; sequence MLSFP. A helical transmembrane segment spans residues 291-311; it reads LAYGLFQLIDGFLIVAAYQTY. Topologically, residues 312 to 377 are cytoplasmic; that stretch reads KRRLKNKHGK…EPVGHITSCE (66 aa).

The protein belongs to the bile acid:sodium symporter (BASS) (TC 2.A.28) family. In terms of processing, glycosylated. Highly expressed in testis, placenta and pancreas. Moderately expressed in heart, lung and mammary gland. Weakly expressed in brain, colon, kidney, liver, ovary, prostate, small intestine, spleen and thymus.

The protein resides in the membrane. It carries out the reaction estrone 3-sulfate(out) + 2 Na(+)(out) = estrone 3-sulfate(in) + 2 Na(+)(in). The catalysed reaction is 17beta-estradiol 3-sulfate(out) + 2 Na(+)(out) = 17beta-estradiol 3-sulfate(in) + 2 Na(+)(in). The enzyme catalyses dehydroepiandrosterone 3-sulfate(out) + 2 Na(+)(out) = dehydroepiandrosterone 3-sulfate(in) + 2 Na(+)(in). It catalyses the reaction androst-5-ene-diol 3-sulfate(out) + 2 Na(+)(out) = androst-5-ene-diol 3-sulfate(in) + 2 Na(+)(in). It carries out the reaction pregnenolone sulfate(out) + 2 Na(+)(out) = pregnenolone sulfate(in) + 2 Na(+)(in). The catalysed reaction is taurolithocholate 3-sulfate(out) + 2 Na(+)(out) = taurolithocholate 3-sulfate(in) + 2 Na(+)(in). The enzyme catalyses androsterone 3alpha-sulfate(out) + 2 Na(+)(out) = androsterone 3alpha-sulfate(in) + 2 Na(+)(in). It catalyses the reaction 5alpha-dihydrotestosterone sulfate(out) + 2 Na(+)(out) = 5alpha-dihydrotestosterone sulfate(in) + 2 Na(+)(in). It carries out the reaction 17beta-estradiol 17-sulfate(out) + 2 Na(+)(out) = 17beta-estradiol 17-sulfate(in) + 2 Na(+)(in). The catalysed reaction is 17alpha-hydroxypregnenolone 3-sulfate(out) + 2 Na(+)(out) = 17alpha-hydroxypregnenolone 3-sulfate(in) + 2 Na(+)(in). The enzyme catalyses epiandrosterone 3-sulfate(out) + 2 Na(+)(out) = epiandrosterone 3-sulfate(in) + 2 Na(+)(in). It catalyses the reaction epitestosterone 17-sulfate(out) + 2 Na(+)(out) = epitestosterone 17-sulfate(in) + 2 Na(+)(in). It carries out the reaction testosterone 17-sulfate(out) + 2 Na(+)(out) = testosterone 17-sulfate(in) + 2 Na(+)(in). The catalysed reaction is 16alpha-hydroxydehydroepiandrosterone 3-sulfate(out) + 2 Na(+)(out) = 16alpha-hydroxydehydroepiandrosterone 3-sulfate(in) + 2 Na(+)(in). Its function is as follows. Transports sulfoconjugated steroid hormones from the extracellular compartment into the cytosol in a sodium-dependent manner without hydrolysis. Steroid sulfate hormones are commonly considered to be biologically inactive metabolites, that may be activated by steroid sulfatases into free steroids. May play an important role by delivering sulfoconjugated steroids to specific target cells in reproductive organs. May play a role transporting the estriol precursor 16alpha-hydroxydehydroepiandrosterone 3-sulfate (16a-OH-DHEAS) at the fetal blood vessel endothelium. Can also transport other sulfoconjugated molecules such as taurolithocholic acid-3-sulfate and sulfoconjugated pyrenes. This chain is Sodium-dependent organic anion transporter (SLC10A6), found in Homo sapiens (Human).